The primary structure comprises 557 residues: Beta-amylase 2, chloroplastic (557 aa).

A chloroplast-targeting transit peptide spans 1 to 38 (MMSLNLAHQTGAAAAVAPAAPRTAVVAAAAGTVSAPAV). Residues Asp135, His175, and Asp183 each contribute to the substrate site. Residue Glu267 is the Proton donor of the active site. 3 residues coordinate substrate: Lys380, His385, and Thr427. The Proton acceptor role is filled by Glu465. Substrate contacts are provided by residues 466-467 (NA) and Arg499.

This sequence belongs to the glycosyl hydrolase 14 family.

Its subcellular location is the plastid. It is found in the chloroplast. The enzyme catalyses Hydrolysis of (1-&gt;4)-alpha-D-glucosidic linkages in polysaccharides so as to remove successive maltose units from the non-reducing ends of the chains.. Its function is as follows. Possesses beta-amylase activity in vitro. May be involved in cold resistance by mediating the accumulation of maltose upon freezing stress, thus contributing to the protection of membranes. This chain is Beta-amylase 2, chloroplastic, found in Oryza sativa subsp. japonica (Rice).